Reading from the N-terminus, the 234-residue chain is Ribose-5-phosphate isomerase A (234 aa).

Substrate contacts are provided by residues threonine 28–threonine 31, aspartate 83–aspartate 86, and lysine 96–glycine 99. The active-site Proton acceptor is the glutamate 105. Position 123 (lysine 123) interacts with substrate.

It belongs to the ribose 5-phosphate isomerase family. In terms of assembly, homodimer.

The catalysed reaction is aldehydo-D-ribose 5-phosphate = D-ribulose 5-phosphate. Its pathway is carbohydrate degradation; pentose phosphate pathway; D-ribose 5-phosphate from D-ribulose 5-phosphate (non-oxidative stage): step 1/1. In terms of biological role, catalyzes the reversible conversion of ribose-5-phosphate to ribulose 5-phosphate. The polypeptide is Ribose-5-phosphate isomerase A (Bartonella quintana (strain Toulouse) (Rochalimaea quintana)).